A 224-amino-acid chain; its full sequence is Transcriptional regulatory protein CiaR (224 aa).

One can recognise a Response regulatory domain in the interval Lys3–Leu116. 4-aspartylphosphate is present on Asp51. Residues Glu124–Asp222 constitute a DNA-binding region (ompR/PhoB-type).

Post-translationally, phosphorylated by CiaH.

It is found in the cytoplasm. Functionally, member of the two-component regulatory system CiaH/CiaR. Involved in early steps of competence regulation and in penicillin susceptibility. The polypeptide is Transcriptional regulatory protein CiaR (ciaR) (Streptococcus pneumoniae (strain ATCC BAA-255 / R6)).